A 495-amino-acid chain; its full sequence is UDP-N-acetylmuramoyl-L-alanyl-D-glutamate--2,6-diaminopimelate ligase (495 aa).

Ser29 is a UDP-N-acetyl-alpha-D-muramoyl-L-alanyl-D-glutamate binding site. 111-117 is an ATP binding site; sequence GTNGKTS. UDP-N-acetyl-alpha-D-muramoyl-L-alanyl-D-glutamate-binding positions include 153 to 154, Ser180, Gln186, and Arg188; that span reads TT. Lys220 is modified (N6-carboxylysine). Meso-2,6-diaminopimelate contacts are provided by residues Arg384, 408 to 411, Gly459, and Glu463; that span reads DNPR. A Meso-diaminopimelate recognition motif motif is present at residues 408-411; it reads DNPR.

It belongs to the MurCDEF family. MurE subfamily. Requires Mg(2+) as cofactor. Post-translationally, carboxylation is probably crucial for Mg(2+) binding and, consequently, for the gamma-phosphate positioning of ATP.

The protein localises to the cytoplasm. The enzyme catalyses UDP-N-acetyl-alpha-D-muramoyl-L-alanyl-D-glutamate + meso-2,6-diaminopimelate + ATP = UDP-N-acetyl-alpha-D-muramoyl-L-alanyl-gamma-D-glutamyl-meso-2,6-diaminopimelate + ADP + phosphate + H(+). The protein operates within cell wall biogenesis; peptidoglycan biosynthesis. Its function is as follows. Catalyzes the addition of meso-diaminopimelic acid to the nucleotide precursor UDP-N-acetylmuramoyl-L-alanyl-D-glutamate (UMAG) in the biosynthesis of bacterial cell-wall peptidoglycan. The polypeptide is UDP-N-acetylmuramoyl-L-alanyl-D-glutamate--2,6-diaminopimelate ligase (Xanthomonas campestris pv. campestris (strain 8004)).